The sequence spans 401 residues: Phosphoglycerate kinase, cytosolic (401 aa).

Residues Ala24, Asp25, Asn27, Arg41, Ser63, His64, Gly66, Arg67, Arg122, His154, and Arg155 each contribute to the (2R)-3-phosphoglycerate site. Gly200 contacts ADP. Gly200 contacts CDP. Positions 202 and 206 each coordinate AMP. Lys206 contributes to the ATP binding site. An ADP-binding site is contributed by Gly224. Residue Gly224 coordinates CDP. Residues Gly225 and Gly297 each contribute to the AMP site. Positions 225 and 297 each coordinate ATP. Residues Gly322 and Phe327 each contribute to the CDP site. Residue Phe327 participates in ADP binding. Residue Glu328 participates in AMP binding. Residues Glu328, Asp359, and Ser360 each coordinate ATP. Position 359 (Asp359) interacts with Mg(2+).

The protein belongs to the phosphoglycerate kinase family. In terms of assembly, monomer. It depends on Mg(2+) as a cofactor.

It is found in the cytoplasm. The catalysed reaction is (2R)-3-phosphoglycerate + ATP = (2R)-3-phospho-glyceroyl phosphate + ADP. It participates in carbohydrate degradation; glycolysis; pyruvate from D-glyceraldehyde 3-phosphate: step 2/5. In Triticum aestivum (Wheat), this protein is Phosphoglycerate kinase, cytosolic.